The chain runs to 305 residues: Probable lipid kinase YegS-like (305 aa).

The 129-residue stretch at 1–129 (MTQRRAMLIL…VDLGEVGGKL (129 aa)) folds into the DAGKc domain. ATP contacts are provided by residues Thr-39, 65-71 (GDGTLRD), and Thr-92. Mg(2+)-binding residues include Leu-210, Asp-213, and Leu-215. Catalysis depends on Glu-268, which acts as the Proton acceptor.

The protein belongs to the diacylglycerol/lipid kinase family. YegS lipid kinase subfamily. The cofactor is Mg(2+). It depends on Ca(2+) as a cofactor.

The protein localises to the cytoplasm. Functionally, probably phosphorylates lipids; the in vivo substrate is unknown. The polypeptide is Probable lipid kinase YegS-like (Pseudomonas savastanoi pv. phaseolicola (strain 1448A / Race 6) (Pseudomonas syringae pv. phaseolicola (strain 1448A / Race 6))).